The chain runs to 107 residues: Phosphoribosyl-ATP pyrophosphatase (107 aa).

The protein belongs to the PRA-PH family.

The protein localises to the cytoplasm. It catalyses the reaction 1-(5-phospho-beta-D-ribosyl)-ATP + H2O = 1-(5-phospho-beta-D-ribosyl)-5'-AMP + diphosphate + H(+). Its pathway is amino-acid biosynthesis; L-histidine biosynthesis; L-histidine from 5-phospho-alpha-D-ribose 1-diphosphate: step 2/9. The chain is Phosphoribosyl-ATP pyrophosphatase from Zymomonas mobilis subsp. mobilis (strain ATCC 31821 / ZM4 / CP4).